The following is a 688-amino-acid chain: Glycine--tRNA ligase beta subunit (688 aa).

It belongs to the class-II aminoacyl-tRNA synthetase family. As to quaternary structure, tetramer of two alpha and two beta subunits.

The protein resides in the cytoplasm. The enzyme catalyses tRNA(Gly) + glycine + ATP = glycyl-tRNA(Gly) + AMP + diphosphate. This Listeria monocytogenes serotype 4a (strain HCC23) protein is Glycine--tRNA ligase beta subunit.